Consider the following 284-residue polypeptide: 2-dehydro-3-deoxyphosphooctonate aldolase (284 aa).

The protein belongs to the KdsA family.

The protein resides in the cytoplasm. It carries out the reaction D-arabinose 5-phosphate + phosphoenolpyruvate + H2O = 3-deoxy-alpha-D-manno-2-octulosonate-8-phosphate + phosphate. It functions in the pathway carbohydrate biosynthesis; 3-deoxy-D-manno-octulosonate biosynthesis; 3-deoxy-D-manno-octulosonate from D-ribulose 5-phosphate: step 2/3. The protein operates within bacterial outer membrane biogenesis; lipopolysaccharide biosynthesis. The protein is 2-dehydro-3-deoxyphosphooctonate aldolase of Bordetella petrii (strain ATCC BAA-461 / DSM 12804 / CCUG 43448).